The sequence spans 223 residues: uncharacterized protein (223 aa).

This is an uncharacterized protein from Acanthamoeba polyphaga (Amoeba).